The chain runs to 515 residues: RNA-splicing ligase RtcB homolog (515 aa).

Positions 129, 132, 237, 269, and 363 each coordinate Mn(2+). 236 to 240 (NHYAE) is a GMP binding site. Residues 363-364 (HN), 412-415 (GGTM), Ser-419, 438-441 (HGAG), and Lys-514 each bind GMP. Residue His-438 is the GMP-histidine intermediate of the active site.

This sequence belongs to the RtcB family. As to quaternary structure, catalytic component of the tRNA-splicing ligase complex. Mn(2+) serves as cofactor.

The catalysed reaction is a 3'-end 3'-phospho-ribonucleotide-RNA + a 5'-end dephospho-ribonucleoside-RNA + GTP = a ribonucleotidyl-ribonucleotide-RNA + GMP + diphosphate. It carries out the reaction a 3'-end 2',3'-cyclophospho-ribonucleotide-RNA + a 5'-end dephospho-ribonucleoside-RNA + GTP + H2O = a ribonucleotidyl-ribonucleotide-RNA + GMP + diphosphate + H(+). In terms of biological role, catalytic subunit of the tRNA-splicing ligase complex that acts by directly joining spliced tRNA halves to mature-sized tRNAs by incorporating the precursor-derived splice junction phosphate into the mature tRNA as a canonical 3',5'-phosphodiester. May act as an RNA ligase with broad substrate specificity, and may function toward other RNAs. The protein is RNA-splicing ligase RtcB homolog of Ostreococcus tauri.